Reading from the N-terminus, the 119-residue chain is MIIGIGIDIIELNRIEKMLDGKLKFMERILTKNERNVAMELKGSRLTEFVAGRFAAKEAYSKAVGTGIGKEVSFLDIEVKNDERGKPILITSTEYVVHLSISHSKEFAVAQVVLESSSR.

Positions 8 and 58 each coordinate Mg(2+).

This sequence belongs to the P-Pant transferase superfamily. AcpS family. Mg(2+) serves as cofactor.

The protein resides in the cytoplasm. The catalysed reaction is apo-[ACP] + CoA = holo-[ACP] + adenosine 3',5'-bisphosphate + H(+). Transfers the 4'-phosphopantetheine moiety from coenzyme A to a Ser of acyl-carrier-protein. This is Holo-[acyl-carrier-protein] synthase from Bacillus cereus (strain G9842).